The following is a 147-amino-acid chain: UPF0306 protein YhbP (147 aa).

The protein belongs to the UPF0306 family.

The sequence is that of UPF0306 protein YhbP from Salmonella agona (strain SL483).